The following is a 237-amino-acid chain: Lectin (237 aa).

N-linked (GlcNAc...) asparagine glycosylation occurs at N69. Residue I106 is modified to Blocked amino end (Ile). Mn(2+) contacts are provided by E115 and D117. Residues D117, Y120, N122, and D127 each coordinate Ca(2+). Mn(2+) contacts are provided by D127 and H132.

The protein belongs to the leguminous lectin family. Tetramer of two alpha and two beta chains. The N-terminus of alpha chain is blocked. The alpha and beta chains are produced by proteolytic processing, with probably the loss of intervening amino acid(s).

D-mannose/D-glucose-binding lectin. Requires Ca(2+) and Mn(2+) ions for full activity. The sequence is that of Lectin from Lablab purpureus (Hyacinth bean).